The following is a 448-amino-acid chain: Methionine aminopeptidase 2 (448 aa).

Residues 1 to 17 (MPATAEAADAATQATDA) show a composition bias toward low complexity. The disordered stretch occupies residues 1 to 87 (MPATAEAADA…QTEPPSIGLT (87 aa)). The segment covering 21–34 (KLEENKLPEGQERG) has biased composition (basic and acidic residues). The segment covering 35–46 (PEEEEDDDDDET) has biased composition (acidic residues). Basic residues predominate over residues 55 to 71 (KKKKKKKSGAKKKKSKT). Histidine 200 contacts substrate. A divalent metal cation is bound by residues aspartate 220, aspartate 231, and histidine 300. Histidine 308 provides a ligand contact to substrate. A divalent metal cation-binding residues include glutamate 334 and glutamate 429.

The protein belongs to the peptidase M24A family. Methionine aminopeptidase eukaryotic type 2 subfamily. Co(2+) is required as a cofactor. Requires Zn(2+) as cofactor. The cofactor is Mn(2+). Fe(2+) serves as cofactor.

It localises to the cytoplasm. The catalysed reaction is Release of N-terminal amino acids, preferentially methionine, from peptides and arylamides.. In terms of biological role, cotranslationally removes the N-terminal methionine from nascent proteins. The N-terminal methionine is often cleaved when the second residue in the primary sequence is small and uncharged (Met-Ala-, Cys, Gly, Pro, Ser, Thr, or Val). The sequence is that of Methionine aminopeptidase 2 from Malassezia globosa (strain ATCC MYA-4612 / CBS 7966) (Dandruff-associated fungus).